Here is a 321-residue protein sequence, read N- to C-terminus: Porphobilinogen deaminase (321 aa).

At cysteine 243 the chain carries S-(dipyrrolylmethanemethyl)cysteine.

This sequence belongs to the HMBS family. In terms of assembly, monomer. The cofactor is dipyrromethane.

It carries out the reaction 4 porphobilinogen + H2O = hydroxymethylbilane + 4 NH4(+). It functions in the pathway porphyrin-containing compound metabolism; protoporphyrin-IX biosynthesis; coproporphyrinogen-III from 5-aminolevulinate: step 2/4. In terms of biological role, tetrapolymerization of the monopyrrole PBG into the hydroxymethylbilane pre-uroporphyrinogen in several discrete steps. This is Porphobilinogen deaminase from Histophilus somni (strain 129Pt) (Haemophilus somnus).